A 142-amino-acid polypeptide reads, in one-letter code: Putative tyrosine phosphatase 123R (142 aa).

Residues 2–137 form the Tyrosine-protein phosphatase domain; sequence EPTKIVENLY…LAQFERWLNS (136 aa). Cysteine 81 functions as the Phosphocysteine intermediate in the catalytic mechanism.

The protein belongs to the protein-tyrosine phosphatase family.

This chain is Putative tyrosine phosphatase 123R, found in Invertebrate iridescent virus 6 (IIV-6).